The following is a 470-amino-acid chain: Chromosomal replication initiator protein DnaA (470 aa).

Residues 1–89 (MIESNHVVLW…YNVMVDKTSI (89 aa)) form a domain I, interacts with DnaA modulators region. A domain II region spans residues 89-130 (IPNQTVNLEASNRSTAVTPKSIVGGNKAPSFLKAPAVQDLDP). The segment at 131–348 (HLNPNYNFEN…GIVIAIMARS (218 aa)) is domain III, AAA+ region. The ATP site is built by glycine 176, glycine 178, lysine 179, and threonine 180. The tract at residues 349–470 (TIFNKEIDLD…EIESLLKKKA (122 aa)) is domain IV, binds dsDNA.

It belongs to the DnaA family. In terms of assembly, oligomerizes as a right-handed, spiral filament on DNA at oriC.

It is found in the cytoplasm. Its function is as follows. Plays an essential role in the initiation and regulation of chromosomal replication. ATP-DnaA binds to the origin of replication (oriC) to initiate formation of the DNA replication initiation complex once per cell cycle. Binds the DnaA box (a 9 base pair repeat at the origin) and separates the double-stranded (ds)DNA. Forms a right-handed helical filament on oriC DNA; dsDNA binds to the exterior of the filament while single-stranded (ss)DNA is stabiized in the filament's interior. The ATP-DnaA-oriC complex binds and stabilizes one strand of the AT-rich DNA unwinding element (DUE), permitting loading of DNA polymerase. After initiation quickly degrades to an ADP-DnaA complex that is not apt for DNA replication. Binds acidic phospholipids. The protein is Chromosomal replication initiator protein DnaA of Bacteroides thetaiotaomicron (strain ATCC 29148 / DSM 2079 / JCM 5827 / CCUG 10774 / NCTC 10582 / VPI-5482 / E50).